We begin with the raw amino-acid sequence, 446 residues long: Acyl-lipid (8-3)-desaturase (446 aa).

Residues 6–82 (GKTFTWEELA…MKKYYVGTLV (77 aa)) form the Cytochrome b5 heme-binding domain. 2 residues coordinate heme: H41 and H64. 2 helical membrane passes run 125–145 (ALIFGSLIASYYAQLFVPFVV) and 150–170 (LQVVFAIIMGFACAQVGLNPL). Positions 171–175 (HDASH) match the Histidine box-1 motif. The Histidine box-2 signature appears at 207–212 (HMLGHH). The Histidine box-3 motif lies at 387–391 (QAVHH).

This sequence belongs to the fatty acid desaturase type 1 family. It depends on Fe(2+) as a cofactor.

The protein localises to the membrane. It catalyses the reaction an (8Z,11Z,14Z)-icosatrienoyl-containing glycerolipid + 2 Fe(II)-[cytochrome b5] + O2 + 2 H(+) = (5Z,8Z,11Z,14Z)-eicosatetraenoyl-containing glycerolipid + 2 Fe(III)-[cytochrome b5] + 2 H2O. The catalysed reaction is an (8Z,11Z,14Z,17Z)-eicosatetraenoyl-containing glycerolipid + 2 Fe(II)-[cytochrome b5] + O2 + 2 H(+) = a (5Z,8Z,11Z,14Z,17Z)-eicosapentaenoyl-containing glycerolipid + 2 Fe(III)-[cytochrome b5] + 2 H2O. Functionally, fatty acid desaturase that introduces a cis double bond at the 5-position in 20-carbon polyunsaturated fatty acids incorporated in a glycerolipid that contain a Delta(8) double bond. Involved in the conversion of di-homo-Delta-linolenic acid to arachidonic acid. Essential in the production of eicosanoids. This is Acyl-lipid (8-3)-desaturase (DES1) from Mortierella alpina (Oleaginous fungus).